Consider the following 335-residue polypeptide: Biotin synthase (335 aa).

The Radical SAM core domain maps to Tyr43–Ala269. [4Fe-4S] cluster contacts are provided by Cys61, Cys65, and Cys68. Residues Cys104, Cys137, Cys197, and Arg267 each coordinate [2Fe-2S] cluster.

This sequence belongs to the radical SAM superfamily. Biotin synthase family. Homodimer. The cofactor is [4Fe-4S] cluster. It depends on [2Fe-2S] cluster as a cofactor.

It carries out the reaction (4R,5S)-dethiobiotin + (sulfur carrier)-SH + 2 reduced [2Fe-2S]-[ferredoxin] + 2 S-adenosyl-L-methionine = (sulfur carrier)-H + biotin + 2 5'-deoxyadenosine + 2 L-methionine + 2 oxidized [2Fe-2S]-[ferredoxin]. Its pathway is cofactor biosynthesis; biotin biosynthesis; biotin from 7,8-diaminononanoate: step 2/2. Its function is as follows. Catalyzes the conversion of dethiobiotin (DTB) to biotin by the insertion of a sulfur atom into dethiobiotin via a radical-based mechanism. This Staphylococcus aureus (strain USA300) protein is Biotin synthase.